Here is a 154-residue protein sequence, read N- to C-terminus: 6,7-dimethyl-8-ribityllumazine synthase (154 aa).

5-amino-6-(D-ribitylamino)uracil is bound by residues phenylalanine 22, 56-58 (AFE), and 80-82 (TVI). Position 85-86 (85-86 (AT)) interacts with (2S)-2-hydroxy-3-oxobutyl phosphate. Histidine 88 acts as the Proton donor in catalysis. Phenylalanine 113 lines the 5-amino-6-(D-ribitylamino)uracil pocket. Arginine 127 is a binding site for (2S)-2-hydroxy-3-oxobutyl phosphate.

This sequence belongs to the DMRL synthase family. Forms an icosahedral capsid composed of 60 subunits, arranged as a dodecamer of pentamers.

The enzyme catalyses (2S)-2-hydroxy-3-oxobutyl phosphate + 5-amino-6-(D-ribitylamino)uracil = 6,7-dimethyl-8-(1-D-ribityl)lumazine + phosphate + 2 H2O + H(+). The protein operates within cofactor biosynthesis; riboflavin biosynthesis; riboflavin from 2-hydroxy-3-oxobutyl phosphate and 5-amino-6-(D-ribitylamino)uracil: step 1/2. Its function is as follows. Catalyzes the formation of 6,7-dimethyl-8-ribityllumazine by condensation of 5-amino-6-(D-ribitylamino)uracil with 3,4-dihydroxy-2-butanone 4-phosphate. This is the penultimate step in the biosynthesis of riboflavin. In Bacillus licheniformis (strain ATCC 14580 / DSM 13 / JCM 2505 / CCUG 7422 / NBRC 12200 / NCIMB 9375 / NCTC 10341 / NRRL NRS-1264 / Gibson 46), this protein is 6,7-dimethyl-8-ribityllumazine synthase.